The following is a 247-amino-acid chain: uncharacterized protein (247 aa).

4 to 28 (ALVTGGSRGIGRATALLLAQEGYTV) lines the NADP(+) pocket. S142 contacts substrate. Y156 functions as the Proton acceptor in the catalytic mechanism.

The protein belongs to the short-chain dehydrogenases/reductases (SDR) family.

This is an uncharacterized protein from Escherichia coli (strain K12).